The following is a 284-amino-acid chain: Bifunctional protein FolD (284 aa).

Residues 166 to 168 and I232 contribute to the NADP(+) site; that span reads GSS.

The protein belongs to the tetrahydrofolate dehydrogenase/cyclohydrolase family. In terms of assembly, homodimer.

The enzyme catalyses (6R)-5,10-methylene-5,6,7,8-tetrahydrofolate + NADP(+) = (6R)-5,10-methenyltetrahydrofolate + NADPH. The catalysed reaction is (6R)-5,10-methenyltetrahydrofolate + H2O = (6R)-10-formyltetrahydrofolate + H(+). Its pathway is one-carbon metabolism; tetrahydrofolate interconversion. Functionally, catalyzes the oxidation of 5,10-methylenetetrahydrofolate to 5,10-methenyltetrahydrofolate and then the hydrolysis of 5,10-methenyltetrahydrofolate to 10-formyltetrahydrofolate. The chain is Bifunctional protein FolD from Buchnera aphidicola subsp. Cinara cedri (strain Cc).